A 279-amino-acid polypeptide reads, in one-letter code: MGIVFNYIDPVAFNLGPLSVRWYGIIIAVGILLGYFVAQRALVKAGLHKDTLVDIIFYSALFGFIAARIYFVIFQWPYYAENPGEIIKIWHGGIAIHGGLIGGFIAGVIVCKVKNLNPFQIGDIVAPSIILAQGIGRWGNFMNHEAHGGPVSRAFLEQLHLPNFIIENMYINSQYYHPTFLYESIWDVAGFIILVNIRKHLKLGETFFLYLTWYSIGRFFIEGLRTDSLMLTSNIRVAQLVSILLILISISLIVYRRIKYNPPLYSKVGALPWPTKKVK.

The next 3 helical transmembrane spans lie at 18-38, 55-75, and 89-109; these read LSVR…YFVA, IIFY…VIFQ, and IWHG…AGVI. R137 lines the a 1,2-diacyl-sn-glycero-3-phospho-(1'-sn-glycerol) pocket. 2 consecutive transmembrane segments (helical) span residues 203-223 and 235-255; these read LGET…FIEG and IRVA…LIVY.

Belongs to the Lgt family.

Its subcellular location is the cell membrane. It catalyses the reaction L-cysteinyl-[prolipoprotein] + a 1,2-diacyl-sn-glycero-3-phospho-(1'-sn-glycerol) = an S-1,2-diacyl-sn-glyceryl-L-cysteinyl-[prolipoprotein] + sn-glycerol 1-phosphate + H(+). The protein operates within protein modification; lipoprotein biosynthesis (diacylglyceryl transfer). Its function is as follows. Catalyzes the transfer of the diacylglyceryl group from phosphatidylglycerol to the sulfhydryl group of the N-terminal cysteine of a prolipoprotein, the first step in the formation of mature lipoproteins. The polypeptide is Phosphatidylglycerol--prolipoprotein diacylglyceryl transferase (Staphylococcus aureus (strain bovine RF122 / ET3-1)).